We begin with the raw amino-acid sequence, 107 residues long: V-type proton ATPase subunit G (107 aa).

It belongs to the V-ATPase G subunit family. As to quaternary structure, V-ATPase is a heteromultimeric enzyme composed of a peripheral catalytic V1 complex (components A to H) attached to an integral membrane V0 proton pore complex (components: a, c, c', c'' and d).

Catalytic subunit of the peripheral V1 complex of vacuolar ATPase (V-ATPase). V-ATPase is responsible for acidifying a variety of intracellular compartments in eukaryotic cells. The protein is V-type proton ATPase subunit G (atp6v1g) of Dictyostelium discoideum (Social amoeba).